A 318-amino-acid polypeptide reads, in one-letter code: (1S)-1,7-diacetoxy-luvungin A aldo-keto reductase (318 aa).

Y54 (proton donor) is an active-site residue.

Belongs to the aldo/keto reductase family. Expressed in flowers, maturing fruits and in juice vesicles.

It carries out the reaction (1S)-1,7-diacetoxy-luvungin A + AH2 + H2O = (1R,2R,3S,8R,10R,11R,15S,16S)-3-(acetyloxy)-15-[(4R)-4-[(2S)-3,3-dimethyloxiran-2-yl]-1,4-dihydroxybutan-2-yl]-2,7,7,11,16-pentamethyl-5-oxo-6-oxatetracyclo[9.7.0.0(2,8).0(12,16)]octadec-12-en-10-yl acetate + acetate + A + H(+). It functions in the pathway secondary metabolite biosynthesis; terpenoid biosynthesis. Aldo-keto reductase involved in the biosynthesis of limonoids triterpene natural products such as limonin, a compound with insecticidal activity responsible for the bitter taste in citrus. Can use (1S)-1,7-diacetoxy-luvungin A as substrate. The protein is (1S)-1,7-diacetoxy-luvungin A aldo-keto reductase of Citrus sinensis (Sweet orange).